We begin with the raw amino-acid sequence, 241 residues long: Aquaporin Z 1 (241 aa).

A helical transmembrane segment spans residues 23–43; that stretch reads AVFAAAFPELGIGFLGVAFAF. Positions 63-65 match the NPA 1 motif; the sequence is NPA. 3 consecutive transmembrane segments (helical) span residues 85–105, 129–149, and 156–176; these read IVAQ…ILTG, LLSA…VILG, and PVGF…LISI. The short motif at 184–186 is the NPA 2 element; it reads NPA. A helical transmembrane segment spans residues 204–224; sequence WLFWLAPILGGAIGAVVWKIF.

Belongs to the MIP/aquaporin (TC 1.A.8) family. Homotetramer.

The protein resides in the cell inner membrane. The enzyme catalyses H2O(in) = H2O(out). In terms of biological role, channel that permits osmotically driven movement of water in both directions. It is involved in the osmoregulation and in the maintenance of cell turgor during volume expansion in rapidly growing cells. It mediates rapid entry or exit of water in response to abrupt changes in osmolarity. This is Aquaporin Z 1 from Agrobacterium fabrum (strain C58 / ATCC 33970) (Agrobacterium tumefaciens (strain C58)).